The following is a 434-amino-acid chain: Enolase (434 aa).

Gln163 lines the (2R)-2-phosphoglycerate pocket. The active-site Proton donor is the Glu205. Residues Asp242, Glu291, and Asp318 each contribute to the Mg(2+) site. (2R)-2-phosphoglycerate contacts are provided by Lys343, Arg372, Ser373, and Lys394. The Proton acceptor role is filled by Lys343.

It belongs to the enolase family. The cofactor is Mg(2+).

Its subcellular location is the cytoplasm. It localises to the secreted. The protein resides in the cell surface. The protein localises to the cell wall. It carries out the reaction (2R)-2-phosphoglycerate = phosphoenolpyruvate + H2O. Its pathway is carbohydrate degradation; glycolysis; pyruvate from D-glyceraldehyde 3-phosphate: step 4/5. In terms of biological role, catalyzes the reversible conversion of 2-phosphoglycerate (2-PG) into phosphoenolpyruvate (PEP). It is essential for the degradation of carbohydrates via glycolysis. The polypeptide is Enolase (Streptococcus pneumoniae serotype 2 (strain D39 / NCTC 7466)).